We begin with the raw amino-acid sequence, 147 residues long: Lysozyme C-3 (147 aa).

An N-terminal signal peptide occupies residues 1-18 (MKALIILGFLFLSVAVQG). The region spanning 19-147 (KVFERCELAR…VSSYVQGCTL (129 aa)) is the C-type lysozyme domain. 4 cysteine pairs are disulfide-bonded: C24/C145, C48/C133, C83/C99, and C95/C113. Active-site residues include E53 and D71.

Belongs to the glycosyl hydrolase 22 family. In terms of assembly, monomer. Stomach-specific.

The enzyme catalyses Hydrolysis of (1-&gt;4)-beta-linkages between N-acetylmuramic acid and N-acetyl-D-glucosamine residues in a peptidoglycan and between N-acetyl-D-glucosamine residues in chitodextrins.. Its function is as follows. Lysozymes have primarily a bacteriolytic function; those in tissues and body fluids are associated with the monocyte-macrophage system and enhance the activity of immunoagents. The protein is Lysozyme C-3 (LYZ3) of Bos taurus (Bovine).